Here is a 1480-residue protein sequence, read N- to C-terminus: C-type mannose receptor 2 (1480 aa).

The N-terminal stretch at 1–30 is a signal peptide; sequence MGPIRPALAPWPRHLLRCVLLLGGLRLGHP. Topologically, residues 31 to 1413 are extracellular; sequence ADSAAALLEP…SAALPENPVA (1383 aa). Residues 40–166 enclose the Ricin B-type lectin domain; the sequence is PDVFLIFSQG…WNIYGSEEDL (127 aa). 2 disulfides stabilise this stretch: C53–C67 and C92–C111. Residues N101 and N139 are each glycosylated (N-linked (GlcNAc...) asparagine). A Fibronectin type-II domain is found at 181-229; it reads SHGKPCTIPFKYDNQWFHGCTSTGREDGHLWCATTQDYGKDERWGFCPI. Cystine bridges form between C186-C212, C200-C227, C265-C358, and C334-C350. The region spanning 243–359 is the C-type lectin 1 domain; the sequence is LTDSCYQFNF…CSIALPYVCK (117 aa). N-linked (GlcNAc...) asparagine glycosylation occurs at N363. C-type lectin domains follow at residues 388-504, 527-643, 677-808, 831-950, 978-1106, 1131-1242, and 1271-1391; these read FQGH…SICK, HSPS…RYIC, KLRH…WICK, FQEA…YICK, FLNK…GFIC, YLNR…GAVC, and FREH…GVVC. 7 disulfide bridges follow: C409–C503, C480–C495, C617–C634, C703–C807, C784–C799, C852–C949, and C926–C941. The N-linked (GlcNAc...) asparagine glycan is linked to N1028. C1077 and C1097 form a disulfide bridge. K1141 participates in a covalent cross-link: Glycyl lysine isopeptide (Lys-Gly) (interchain with G-Cter in SUMO1). Cysteines 1219 and 1233 form a disulfide. N-linked (GlcNAc...) asparagine glycosylation is present at N1348. A disulfide bond links C1367 and C1382. A helical transmembrane segment spans residues 1414-1434; that stretch reads LVVVLTAAVLLLLALLTGALI. Topologically, residues 1435–1480 are cytoplasmic; the sequence is LYRRRQSAERGSFEGARYSRSSRSGPAEATEKNILVSDMEMNEQQE. Residues 1446 to 1480 form a disordered region; the sequence is SFEGARYSRSSRSGPAEATEKNILVSDMEMNEQQE.

Interacts directly with PLAUR/UPAR and PLAU/pro-UPA to form a tri-molecular complex. Interacts with collagen V. Interacts with C-terminal region of type I collagen/COL1A1. In terms of processing, N-glycosylated. Post-translationally, phosphorylated.

Its subcellular location is the cell membrane. In terms of biological role, may play a role as endocytotic lectin receptor displaying calcium-dependent lectin activity. Internalizes glycosylated ligands from the extracellular space for release in an endosomal compartment via clathrin-mediated endocytosis. May be involved in plasminogen activation system controlling the extracellular level of PLAUR/PLAU, and thus may regulate protease activity at the cell surface. May contribute to cellular uptake, remodeling and degradation of extracellular collagen matrices. May participate in remodeling of extracellular matrix cooperating with the matrix metalloproteinases (MMPs) secreted by hepatic stellate cells. May mediate endocytosis of partially degraded collagens and glycoproteins produced in the extracellular matrix by MMPs. The chain is C-type mannose receptor 2 (Mrc2) from Rattus norvegicus (Rat).